The sequence spans 73 residues: Capsid protein G8P (73 aa).

The signal sequence occupies residues 1 to 23 (MKKSLVLKASVAVATLVPMLSFA). Over 24–44 (AEGDDPAKAAFDSLQASATEY) the chain is Periplasmic. The helical transmembrane segment at 45-65 (IGYAWAMVVVIVGATIGIKLF) threads the bilayer. The Cytoplasmic portion of the chain corresponds to 66 to 73 (KKFTSKAS).

This sequence belongs to the inovirus capsid protein family. Homomultimerizes. There are several thousands of this protein in the phage capsid.

It is found in the virion. The protein resides in the host membrane. Its function is as follows. Self assembles to form a helical capsid wrapping up the viral genomic DNA. The capsid displays a filamentous structure with a length of 760-1950 nm and a width of 6-8 nm. The virion assembly and budding take place at the host inner membrane. This is Capsid protein G8P (VIII) from Escherichia coli (Bacteriophage f1).